The chain runs to 239 residues: Ribonuclease 3 (239 aa).

An RNase III domain is found at 11–133 (HAAIQKKLGY…MFAAVSFDAD (123 aa)). Glutamate 46 contacts Mg(2+). Aspartate 50 is an active-site residue. Mg(2+) contacts are provided by aspartate 119 and glutamate 122. The 71-residue stretch at 160 to 230 (DGKTALQEAL…AKEALKWLEE (71 aa)) folds into the DRBM domain.

The protein belongs to the ribonuclease III family. Homodimer. Mg(2+) is required as a cofactor.

The protein resides in the cytoplasm. It catalyses the reaction Endonucleolytic cleavage to 5'-phosphomonoester.. Its function is as follows. Digests double-stranded RNA. Involved in the processing of primary rRNA transcript to yield the immediate precursors to the large and small rRNAs (23S and 16S). Also processes some mRNAs, and tRNAs when they are encoded in the rRNA operon. In terms of biological role, CRISPR (clustered regularly interspaced short palindromic repeat) is an adaptive immune system that provides protection against mobile genetic elements (viruses, transposable elements and conjugative plasmids). CRISPR clusters contain spacers, sequences complementary to antecedent mobile elements, and target invading nucleic acids. CRISPR clusters are transcribed and processed into CRISPR RNA (crRNA). In this organism endogenous ribonuclease 3 and Cas9 are required for correct coprocessing of pre-crRNA and the trans-encoded small RNA (tracrRNA). Cas9, crRNA and tracRNA are required for cleavage of invading DNA. Involved in 3'-end processing but not 5'-end processing of crRNA and tracrRNA. This chain is Ribonuclease 3, found in Neisseria meningitidis serogroup C (strain 8013).